The primary structure comprises 199 residues: Nucleoside triphosphate pyrophosphatase (199 aa).

Asp76 (proton acceptor) is an active-site residue.

Belongs to the Maf family. The cofactor is a divalent metal cation.

It localises to the cytoplasm. The enzyme catalyses a ribonucleoside 5'-triphosphate + H2O = a ribonucleoside 5'-phosphate + diphosphate + H(+). It carries out the reaction a 2'-deoxyribonucleoside 5'-triphosphate + H2O = a 2'-deoxyribonucleoside 5'-phosphate + diphosphate + H(+). In terms of biological role, nucleoside triphosphate pyrophosphatase. May have a dual role in cell division arrest and in preventing the incorporation of modified nucleotides into cellular nucleic acids. In Caulobacter vibrioides (strain ATCC 19089 / CIP 103742 / CB 15) (Caulobacter crescentus), this protein is Nucleoside triphosphate pyrophosphatase.